The chain runs to 1289 residues: SH3 domain and tetratricopeptide repeat-containing protein 2 (1289 aa).

SH3 domains are found at residues 176–239 (EGHF…PLPV) and 267–330 (IGRG…LDSC). Positions 393-442 (SQPEGFREARSGGTWMERQTIGSRRSSGSGDSSPEEDELISASSDSYHLP) are disordered. The span at 414–424 (GSRRSSGSGDS) shows a compositional bias: low complexity. 8 TPR repeats span residues 529–562 (ARLCFLLGRLSIRKTKLSQARVYFEEAIRVLDGA), 758–791 (RTLCLILSKMYLQHQSPDGSVHYLSQAHVLGKLL), 837–870 (GVVHNLLGLAFEDEGRTSRAAKSYLRALIRAREM), 1002–1038 (GQLLESLGQLYRNLNTSRSLRRSLACIKESLRIFVDL), 1085–1119 (LKLYEEAGDVFFNGTRHRHRAVEYYRAGAVPLARR), 1120–1153 (MKALRTELRIFNKLTELQISLEGYEKALEFATLA), 1167–1200 (LVAFHRLATVYFSLNMYEMAEDCYLKTLSLCPPW), and 1211–1245 (AKVYCRLGRLTFYQLKDAHDATEYFLLALAAAVLM).

This is SH3 domain and tetratricopeptide repeat-containing protein 2 (Sh3tc2) from Mus musculus (Mouse).